The following is a 415-amino-acid chain: L-cysteine:1D-myo-inositol 2-amino-2-deoxy-alpha-D-glucopyranoside ligase (415 aa).

C47 lines the Zn(2+) pocket. Residues C47–T50, T62, and N85–T87 each bind L-cysteinyl-5'-AMP. A 'HIGH' region motif is present at residues I49 to H59. A 'ERGGDP' region motif is present at residues E190–P195. Residue W230 participates in L-cysteinyl-5'-AMP binding. C234 serves as a coordination point for Zn(2+). G252 to D254 serves as a coordination point for L-cysteinyl-5'-AMP. Residue H259 coordinates Zn(2+). An L-cysteinyl-5'-AMP-binding site is contributed by I286. Residues K292–S296 carry the 'KMSKS' region motif.

This sequence belongs to the class-I aminoacyl-tRNA synthetase family. MshC subfamily. As to quaternary structure, monomer. Requires Zn(2+) as cofactor.

The catalysed reaction is 1D-myo-inositol 2-amino-2-deoxy-alpha-D-glucopyranoside + L-cysteine + ATP = 1D-myo-inositol 2-(L-cysteinylamino)-2-deoxy-alpha-D-glucopyranoside + AMP + diphosphate + H(+). Its function is as follows. Catalyzes the ATP-dependent condensation of GlcN-Ins and L-cysteine to form L-Cys-GlcN-Ins. The polypeptide is L-cysteine:1D-myo-inositol 2-amino-2-deoxy-alpha-D-glucopyranoside ligase (mshC) (Mycolicibacterium paratuberculosis (strain ATCC BAA-968 / K-10) (Mycobacterium paratuberculosis)).